We begin with the raw amino-acid sequence, 220 residues long: Putative phosphatase YhcW (220 aa).

Residue Asp8 is the Nucleophile of the active site. Positions 8, 10, and 166 each coordinate a divalent metal cation. Residue Asp10 is the Proton donor of the active site.

It belongs to the HAD-like hydrolase superfamily. CbbY/CbbZ/Gph/YieH family. The cofactor is a divalent metal cation.

The polypeptide is Putative phosphatase YhcW (yhcW) (Bacillus subtilis (strain 168)).